A 29-amino-acid polypeptide reads, in one-letter code: Cytochrome b6-f complex subunit 8 (29 aa).

The chain crosses the membrane as a helical span at residues 3 to 23 (ILTLGWVSVLTLFTYSIAMVV).

It belongs to the PetN family. As to quaternary structure, the 4 large subunits of the cytochrome b6-f complex are cytochrome b6, subunit IV (17 kDa polypeptide, PetD), cytochrome f and the Rieske protein, while the 4 small subunits are PetG, PetL, PetM and PetN. The complex functions as a dimer.

The protein resides in the cellular thylakoid membrane. Functionally, component of the cytochrome b6-f complex, which mediates electron transfer between photosystem II (PSII) and photosystem I (PSI), cyclic electron flow around PSI, and state transitions. The chain is Cytochrome b6-f complex subunit 8 from Acaryochloris marina (strain MBIC 11017).